The chain runs to 766 residues: Leucine-rich repeat and fibronectin type III domain-containing protein 1 (766 aa).

The signal sequence occupies residues 1–31 (MAPGPFSSGLFSPPPAALPFLLLLWAGASRG). One can recognise an LRRNT domain in the interval 32–65 (QPCPGRCICQNVAPTLTMLCAKTGLLFVPPAIDR). The Extracellular segment spans residues 32–536 (QPCPGRCICQ…LRAHFLGGTM (505 aa)). LRR repeat units lie at residues 66–87 (RVVE…DFAN), 90–111 (SLVH…AFAD), 114–135 (ALRA…QLRG), 138–159 (NLRH…AFDA), 163–184 (TVED…AVGQ), 187–208 (NLNT…TFVQ), and 211–232 (KLVR…GLFL). Residue asparagine 87 is glycosylated (N-linked (GlcNAc...) asparagine). The LRRCT domain maps to 252 to 298 (NPLHCNCELLWLRRLTREDDLETCATPEHLTDRYFWSIPEEEFLCEP). Residues 299 to 386 (PLITRQAGGR…GEATAPVEVC (88 aa)) enclose the Ig-like domain. Cysteine 321 and cysteine 370 are disulfide-bonded. Asparagine 343 is a glycosylation site (N-linked (GlcNAc...) asparagine). The disordered stretch occupies residues 397-424 (PAAPPPLTEPGSSDIATPGRPGANDSTS). The 97-residue stretch at 424–520 (SERRLVAAEL…GCVQFTTAGD (97 aa)) folds into the Fibronectin type-III domain. The chain crosses the membrane as a helical span at residues 537–557 (IIAIGGVIVASVLVFIVLLMI). At 558–766 (RYKVYGDGDS…STEWMLESTV (209 aa)) the chain is on the cytoplasmic side. Disordered stretches follow at residues 568–601 (RRIK…PPAP) and 645–742 (LCLL…GEDG). Phosphoserine is present on serine 713. Over residues 714–727 (YPRRARRTKRHRST) the composition is skewed to basic residues. Residues 763-766 (ESTV) carry the PDZ-binding motif.

Belongs to the LRFN family. In terms of assembly, can form heteromeric complexes with LRFN2, LRFN3, LRFN4 and LRFN5. Forms homomeric complexes, but not across cell junctions. Interacts with DLG4. Also interacts with DLG1, DLG2, and DLG3. Interacts with 2 AMPA receptor subunits GRIA1 and GRIA2 and NMDA receptor subunit GRIN1. Glycosylated. Predominantly expressed in the brain, with a weak, but broad expression in the cerebral cortex and diencephalic nuclei. Also detected in other parts of the central nervous system, including the olfactory bulb, pons, cerebellum, and medulla oblongata, as well as in the peripheral nervous system, such as the ganglia of cranial nerves and the dorsal root ganglion during gestation.

Its subcellular location is the membrane. It localises to the synapse. It is found in the postsynaptic density membrane. Its function is as follows. Promotes neurite outgrowth in hippocampal neurons. Involved in the regulation and maintenance of excitatory synapses. Induces the clustering of excitatory postsynaptic proteins, including DLG4, DLGAP1, GRIA1 and GRIN1. The polypeptide is Leucine-rich repeat and fibronectin type III domain-containing protein 1 (Lrfn1) (Mus musculus (Mouse)).